A 396-amino-acid chain; its full sequence is Probable sugar efflux transporter (396 aa).

12 helical membrane-spanning segments follow: residues 15–35 (VVTL…PVGL), 50–70 (VGIM…PFML), 81–101 (LICL…SWSF), 103–123 (VLVI…SITA), 136–156 (AQAL…GLPL), 170–190 (FFAI…LLPL), 209–229 (PALM…YTAY), 246–266 (FATA…VIFG), 275–295 (ALVS…LPAA), 299–319 (IHLG…GLGM), 333–353 (VAMA…ALVG), and 364–384 (MIGY…IIIF).

Belongs to the major facilitator superfamily. SotB (TC 2.A.1.2) family.

The protein localises to the cell inner membrane. Functionally, involved in the efflux of sugars. The physiological role may be the reduction of the intracellular concentration of toxic sugars or sugar metabolites. The polypeptide is Probable sugar efflux transporter (Escherichia coli O139:H28 (strain E24377A / ETEC)).